The primary structure comprises 152 residues: Psoriasis susceptibility 1 candidate gene 1 protein (152 aa).

Positions 1–31 (MTCTDQKSHSQRALGTQTPALQGPQLLNTDP) are enriched in polar residues. Residues 1 to 42 (MTCTDQKSHSQRALGTQTPALQGPQLLNTDPSSEETRPPHVN) form a disordered region.

Expressed in skin. Also found in heart, placenta, liver, skeletal muscle and pancreas.

The sequence is that of Psoriasis susceptibility 1 candidate gene 1 protein (PSORS1C1) from Homo sapiens (Human).